Reading from the N-terminus, the 312-residue chain is Probable HTH-type transcriptional regulator LrhA (312 aa).

An HTH lysR-type domain is found at 11–68 (LDLDLLRTFVAVADLNTFAAAAAAVCRTQSAVSQQMQRLEQLVGKELFARHGRNKLLT). Residues 28 to 47 (FAAAAAAVCRTQSAVSQQMQ) constitute a DNA-binding region (H-T-H motif).

This sequence belongs to the LysR transcriptional regulatory family.

Its function is as follows. Not known, does not seem to act on the proton translocating NADH dehydrogenase genes (nuoA-N) which are part of the lrhA operon. The chain is Probable HTH-type transcriptional regulator LrhA (lrhA) from Escherichia coli (strain K12).